A 944-amino-acid chain; its full sequence is Respiratory burst oxidase homolog protein F (944 aa).

Residues 2-387 (KPFSKNDRRR…VYIMQENWKR (386 aa)) lie on the Cytoplasmic side of the membrane. Coiled-coil stretches lie at residues 102-126 (QFSQ…KRFS) and 157-184 (LEAR…RGLR). EF-hand-like regions lie at residues 207-215 (EKNGYIYRS) and 241-252 (RRLKVEKINHDE). EF-hand domains follow at residues 264 to 299 (SFDS…SASA) and 308 to 343 (QAEE…KDTY). Ca(2+) is bound by residues D277, N279, D281, R283, E288, D321, and Y327. Phosphoserine is present on residues S354 and S358. Residues 388–408 (IWVLSLWIMIMIGLFLWKFFQ) traverse the membrane as a helical segment. Residues 409-475 (YKQKDAFHVM…INFHKTIAGA (67 aa)) are Extracellular-facing. Residues 426–583 (KGAAETLKFN…LFVIVYILLI (158 aa)) enclose the Ferric oxidoreductase domain. A helical membrane pass occupies residues 476-492 (IVVAVILHIGDHLACDF). The Cytoplasmic portion of the chain corresponds to 493 to 527 (PRIVRATEYDYNRYLFHYFQTKQPTYFDLVKGPEG). Residues 528–548 (ITGILMVILMIISFTLATRWF) traverse the membrane as a helical segment. Topologically, residues 549-570 (RRNLVKLPKPFDRLTGFNAFWY) are extracellular. A helical transmembrane segment spans residues 571-591 (SHHLFVIVYILLILHGIFLYF). The Cytoplasmic portion of the chain corresponds to 592 to 599 (AKPWYVRT). A helical membrane pass occupies residues 600–617 (TWMYLAVPVLLYGGERTL). Residues 618 to 744 (RYFRSGSYSV…PYGAPAQDYR (127 aa)) lie on the Extracellular side of the membrane. An FAD-binding FR-type domain is found at 622–742 (SGSYSVRLLK…DGPYGAPAQD (121 aa)). The helical transmembrane segment at 745–765 (KYDVLLLVGLGIGATPFISIL) threads the bilayer. At 766–944 (KDLLNNIVKM…TKFEFHKEHF (179 aa)) the chain is on the cytoplasmic side.

It belongs to the RBOH (TC 5.B.1.3) family. In terms of assembly, monomer and homodimer. Interacts (via N-terminus) with CIPK26. Interacts (via N-terminus) with SRC2. Not glycosylated. Phosphorylated by CIPK26. As to expression, expressed in roots, stems, seedlings, inflorescences, leaves and guard cells.

It localises to the cell membrane. Its activity is regulated as follows. Inhibited by diphenylene iodonium (DPI). Its function is as follows. Calcium-dependent NADPH oxidase that generates superoxide. Generates reactive oxygen species (ROS) during incompatible interactions with pathogens and is important in the regulation of the hypersensitive response (HR). Involved in abscisic acid-induced stomatal closing and in UV-B and abscisic acid ROS-dependent signaling. The chain is Respiratory burst oxidase homolog protein F (RBOHF) from Arabidopsis thaliana (Mouse-ear cress).